Consider the following 593-residue polypeptide: Aspartate--tRNA ligase (593 aa).

Glu180 contributes to the L-aspartate binding site. The aspartate stretch occupies residues 204–207 (QLFK). Arg226 lines the L-aspartate pocket. ATP is bound by residues 226–228 (RDE) and Gln235. His454 lines the L-aspartate pocket. Glu488 contacts ATP. Residue Arg495 participates in L-aspartate binding. 540 to 543 (GFDR) lines the ATP pocket.

Belongs to the class-II aminoacyl-tRNA synthetase family. Type 1 subfamily. As to quaternary structure, homodimer.

The protein resides in the cytoplasm. It carries out the reaction tRNA(Asp) + L-aspartate + ATP = L-aspartyl-tRNA(Asp) + AMP + diphosphate. In terms of biological role, catalyzes the attachment of L-aspartate to tRNA(Asp) in a two-step reaction: L-aspartate is first activated by ATP to form Asp-AMP and then transferred to the acceptor end of tRNA(Asp). This chain is Aspartate--tRNA ligase, found in Clostridium novyi (strain NT).